Reading from the N-terminus, the 83-residue chain is Gene 3 protein (83 aa).

This is Gene 3 protein (3) from Mycobacterium (Mycobacteriophage L5).